A 326-amino-acid polypeptide reads, in one-letter code: Putative HTH-type transcriptional regulator y4qH (326 aa).

The 66-residue stretch at 257–322 folds into the HTH luxR-type domain; the sequence is AVQKIPALSL…VAAIKAISLG (66 aa). The H-T-H motif DNA-binding region spans 281–300; that stretch reads SWDIGVIMRISENTVNFHIK.

This sequence belongs to the autoinducer-regulated transcriptional regulatory protein family.

The sequence is that of Putative HTH-type transcriptional regulator y4qH from Sinorhizobium fredii (strain NBRC 101917 / NGR234).